The chain runs to 903 residues: Valine--tRNA ligase (903 aa).

The span at 1 to 15 (MVCVTDQNNETTSQN) shows a compositional bias: polar residues. Positions 1–21 (MVCVTDQNNETTSQNRADKLP) are disordered. The 'HIGH' region signature appears at 61–71 (PNVTGQLHMGH). Positions 552-556 (KMSKS) match the 'KMSKS' region motif. Lys555 contacts ATP. Positions 836–903 (TVDVAAERKR…RINKRLEELA (68 aa)) form a coiled coil.

It belongs to the class-I aminoacyl-tRNA synthetase family. ValS type 1 subfamily. Monomer.

It is found in the cytoplasm. The catalysed reaction is tRNA(Val) + L-valine + ATP = L-valyl-tRNA(Val) + AMP + diphosphate. Its function is as follows. Catalyzes the attachment of valine to tRNA(Val). As ValRS can inadvertently accommodate and process structurally similar amino acids such as threonine, to avoid such errors, it has a 'posttransfer' editing activity that hydrolyzes mischarged Thr-tRNA(Val) in a tRNA-dependent manner. This chain is Valine--tRNA ligase, found in Corynebacterium glutamicum (strain ATCC 13032 / DSM 20300 / JCM 1318 / BCRC 11384 / CCUG 27702 / LMG 3730 / NBRC 12168 / NCIMB 10025 / NRRL B-2784 / 534).